The sequence spans 294 residues: uncharacterized protein (294 aa).

The region spanning Gln13–Gly151 is the Tyrosine-protein phosphatase domain. Catalysis depends on Cys95, which acts as the Phosphocysteine intermediate. The segment at Pro234 to Val294 is disordered.

This sequence belongs to the protein-tyrosine phosphatase family. Non-receptor class dual specificity subfamily.

This is an uncharacterized protein from Caenorhabditis elegans.